The following is a 129-amino-acid chain: Tumor necrosis factor receptor superfamily member 12A (129 aa).

The first 27 residues, 1 to 27 (MARGSLRRLLRLLVLGLWLALLRSVAG), serve as a signal peptide directing secretion. Topologically, residues 28-80 (EQAPGTAPCSRGSSWSADLDKCMDCASCRARPHSDFCLGCAAAPPAPFRLLWP) are extracellular. 3 disulfides stabilise this stretch: cysteine 36–cysteine 49, cysteine 52–cysteine 67, and cysteine 55–cysteine 64. Residues 36–67 (CSRGSSWSADLDKCMDCASCRARPHSDFCLGC) form a TNFR-Cys; atypical repeat. Residues 81–101 (ILGGALSLTFVLGLLSGFLVW) form a helical membrane-spanning segment. Over 102–129 (RRCRRREKFTTPIEETGGEGCPAVALIQ) the chain is Cytoplasmic.

In terms of assembly, associates with TRAF1 and TRAF2, and probably also with TRAF3. Highly expressed in heart, placenta and kidney. Intermediate expression in lung, skeletal muscle and pancreas.

It localises to the membrane. In terms of biological role, receptor for TNFSF12/TWEAK. Weak inducer of apoptosis in some cell types. Promotes angiogenesis and the proliferation of endothelial cells. May modulate cellular adhesion to matrix proteins. The sequence is that of Tumor necrosis factor receptor superfamily member 12A (TNFRSF12A) from Homo sapiens (Human).